A 1517-amino-acid polypeptide reads, in one-letter code: MLPTSLKTLVLLGALLTGPLGPAGGQDAPSLPREVQRYDGWFNNLKYHQRGAAGSQLRRLVPANYADGVYQALQEPLLPNARLLSDAVSKGKAGLPSAHNRTVLGLFFGYHVLSDLVSVETPGCPAEFLNIYIPRGDPVFDPDKRGNVVLPFQRSRWDRSTGQSPSNPRDLTNQVTGWLDGSAIYGSSHSWSDTLRSFSGGQLASGPDPAFPRNSQNSLLMWMAPDPATGQGGPQGLYAFGAQRGNREPFLQALGLLWFRYHNLCAKRLAQEHPHWGDEELFQHARKRVIATYQNIALYQWLPSFLQKTPPEYSGYRPFMDPSISPEFVAASEQFLSTMVPPGVYMRNSSCHFREFPKEGSSSSPALRVCNNYWIRENPSLKTAQDVDQLLLGMASQISELEDRIVIEDLRDYWPGPDRYSRTDYVASSIQSGRDMGLPSYSQALQALGLEPPKNWSALNPKVDPQVLEATAALYNQDLSRLELFLGGLLESHGDPGPLFSNIILDQFVRLRDGDRYWFENTRNGLFSKEEIAEIRNTTLRDVLVAVSNVDPSALQPNVFFWQEGAPCPQPQQLTTEGLPQCVPVTVIDYFEGSGAGYGVTLLAVCCFPVVSLIIAWVVARFRNRERKMLLKKGKESLKKQTASDGVPAMEWPGPKESSYPVTVQLLPDRSLKVLDKRLTVLRTIQLQPTQQVNLILSSSHGRRTLLLKIPKEYDLVLMFNSEEDRDAFVQLLQDLCVCSTPGLRIAEMDEKELLRKAVTKQQRAGILEIFFRQLFAQVLDINQADAGTLPLDSSQQVREALTCELSRAEFADSLGLKPQDMFVESMFSLADKDGNGYISFREFLDILVVFMKGSPQDKSRLMFTMYDLDGNGFLSKEEFFTMMRSFIEISNNCLSKDQLAEVVESMFRESGFQDKEELTWEDFHFMLRDHDSDLRFTQLCVKGGAGGTGDIFKQSNACRVSFLTRTPGNRVMAPSPRLYTEALQEKMQRGFLAQKLKQFKRFVENYRRHIVCVTIFSAICAGLFADRAYYYGFASPPTDIEETTYVGIILSRGTAASISFMFSYILLTMCRNLITFLRETFLNRYIPFDAAVDFHRWIAMAAVVLAVVHSLGHAVNVYIFSVSPLSLMTCVFPSVFVNDGSKLPPKYYWWFFETVPGMTGVLLLLVLAIMYVFASHHFRRHSFRGFWLTHHLYVVLYALIIIHGSYALIQLPSFHIYFLVPAIIYVGDKLVSLSRKKVEISVVKVELLPSGVTYLQFQRPKTFEYKSGQWVRIACLSLGTNEYHPFTLTSAPHEDTLSLHIRAVGPWTTRLREIYSPPVGGTSARYPKLYLDGPFGEGHQEWHKFEVSVLVGGGIGVTPFASILKDLVFKSSMGTQMLCKKIYFIWVTRTQRQFEWLADIIREVEENGSRDLVSVHIYITQLAEKFDLRTTMLYICERHFQKVLNRSLFTGLRSVTHFGRPPFELFLDSLQEVHPQVHKIGVFSCGPPGMTKNVEKACQLINRQDRAHFVHHYENF.

The signal sequence occupies residues 1-25 (MLPTSLKTLVLLGALLTGPLGPAGG). Over 26-599 (QDAPSLPREV…YFEGSGAGYG (574 aa)) the chain is Extracellular. The segment at 30 to 596 (SLPREVQRYD…VIDYFEGSGA (567 aa)) is peroxidase-like; mediates peroxidase activity. N-linked (GlcNAc...) asparagine glycosylation is found at Asn100, Asn348, Asn455, and Asn537. Cys124 and Cys1131 are disulfide-bonded. Residues 600 to 620 (VTLLAVCCFPVVSLIIAWVVA) form a helical membrane-spanning segment. The Cytoplasmic portion of the chain corresponds to 621-1010 (RFRNRERKML…KRFVENYRRH (390 aa)). EF-hand domains follow at residues 819–854 (PQDMFVESMFSLADKDGNGYISFREFLDILVVFMKG), 855–890 (SPQDKSRLMFTMYDLDGNGFLSKEEFFTMMRSFIEI), and 899–934 (QLAEVVESMFRESGFQDKEELTWEDFHFMLRDHDSD). Residues Asp832, Asp834, Asn836, Tyr838, Glu843, Asp868, Asp870, Asn872, and Glu879 each coordinate Ca(2+). An interaction with TXNDC11 region spans residues 960 to 1214 (RVSFLTRTPG…GSYALIQLPS (255 aa)). A helical transmembrane segment spans residues 1011 to 1031 (IVCVTIFSAICAGLFADRAYY). Residues 1032 to 1046 (YGFASPPTDIEETTY) are Extracellular-facing. The chain crosses the membrane as a helical span at residues 1047-1067 (VGIILSRGTAASISFMFSYIL). The 183-residue stretch at 1053-1235 (RGTAASISFM…YVGDKLVSLS (183 aa)) folds into the Ferric oxidoreductase domain. The Cytoplasmic portion of the chain corresponds to 1068–1100 (LTMCRNLITFLRETFLNRYIPFDAAVDFHRWIA). A helical membrane pass occupies residues 1101-1121 (MAAVVLAVVHSLGHAVNVYIF). The Extracellular segment spans residues 1122–1154 (SVSPLSLMTCVFPSVFVNDGSKLPPKYYWWFFE). The chain crosses the membrane as a helical span at residues 1155-1175 (TVPGMTGVLLLLVLAIMYVFA). Residues 1176-1185 (SHHFRRHSFR) lie on the Cytoplasmic side of the membrane. Residues 1186 to 1206 (GFWLTHHLYVVLYALIIIHGS) traverse the membrane as a helical segment. A topological domain (extracellular) is located at residue Tyr1207. Residues 1208 to 1228 (ALIQLPSFHIYFLVPAIIYVG) traverse the membrane as a helical segment. The Cytoplasmic segment spans residues 1229–1517 (DKLVSLSRKK…AHFVHHYENF (289 aa)). The FAD-binding FR-type domain maps to 1236 to 1342 (RKKVEISVVK…DGPFGEGHQE (107 aa)).

This sequence in the N-terminal section; belongs to the peroxidase family. As to quaternary structure, heterodimer with DUOXA2; disulfide-linked. Interacts with TXNDC11, TPO and CYBA. Post-translationally, N-glycosylated. As to expression, expressed in colon, duodenum, rectum and thyroid.

It is found in the apical cell membrane. It localises to the cell junction. The enzyme catalyses NADH + O2 + H(+) = H2O2 + NAD(+). It carries out the reaction NADPH + O2 + H(+) = H2O2 + NADP(+). It functions in the pathway hormone biosynthesis; thyroid hormone biosynthesis. With respect to regulation, the NADPH oxidase activity is calcium-dependent. Peroxidase activity is inhibited by aminobenzohydrazide. Functionally, generates hydrogen peroxide which is required for the activity of thyroid peroxidase/TPO and lactoperoxidase/LPO. Plays a role in thyroid hormones synthesis and lactoperoxidase-mediated antimicrobial defense at the surface of mucosa. May have its own peroxidase activity through its N-terminal peroxidase-like domain. This Rattus norvegicus (Rat) protein is Dual oxidase 2 (Duox2).